Reading from the N-terminus, the 748-residue chain is Proton-associated sugar transporter A (748 aa).

6 helical membrane passes run 93-113, 123-143, 155-175, 191-211, 233-253, and 268-288; these read ILFG…PVLL, SLVW…LGAW, RPFI…LLNG, WGLL…DSAD, IHAL…GIHW, and VIYL…LVSI. The disordered stretch occupies residues 294 to 339; that stretch reads RPPSEKRAAMKSPSLPLPPSPPVLPEEGPGDSLPSHTATNFSSPIS. A compositionally biased stretch (pro residues) spans 308-317; sequence LPLPPSPPVL. T497 carries the phosphothreonine modification. The next 6 helical transmembrane spans lie at 533 to 553, 573 to 593, 600 to 620, 627 to 647, 685 to 705, and 708 to 728; these read GWLS…EVVF, VTMG…YSAI, FLSV…GTGL, LYVV…LCTL, FLAQ…VGSA, and VMYF…LFVI.

Belongs to the glycoside-pentoside-hexuronide (GPH) cation symporter transporter (TC 2.A.2) family. Expressed in adult heart, brain, muscle and kidney, with very strong expression in brain. Also expressed in fetal brain, kidney and lung.

It is found in the membrane. The catalysed reaction is D-galactose(in) + H(+)(in) = D-galactose(out) + H(+)(out). It catalyses the reaction D-glucose(out) + H(+)(out) = D-glucose(in) + H(+)(in). In terms of biological role, proton-associated glucose transporter in the brain. This is Proton-associated sugar transporter A from Homo sapiens (Human).